A 432-amino-acid polypeptide reads, in one-letter code: Adenylosuccinate synthetase (432 aa).

Residues 12–18 (GDEGKGK) and 40–42 (GHT) contribute to the GTP site. Residue Asp-13 is the Proton acceptor of the active site. 2 residues coordinate Mg(2+): Asp-13 and Gly-40. IMP-binding positions include 13–16 (DEGK), 38–41 (NAGH), Thr-132, Arg-146, Gln-226, Thr-241, and Arg-305. Residue His-41 is the Proton donor of the active site. Position 301–307 (301–307 (VVTGRKR)) interacts with substrate. GTP-binding positions include Arg-307, 333 to 335 (KLD), and 415 to 417 (STS).

Belongs to the adenylosuccinate synthetase family. In terms of assembly, homodimer. Requires Mg(2+) as cofactor.

The protein localises to the cytoplasm. The enzyme catalyses IMP + L-aspartate + GTP = N(6)-(1,2-dicarboxyethyl)-AMP + GDP + phosphate + 2 H(+). It functions in the pathway purine metabolism; AMP biosynthesis via de novo pathway; AMP from IMP: step 1/2. Plays an important role in the de novo pathway of purine nucleotide biosynthesis. Catalyzes the first committed step in the biosynthesis of AMP from IMP. The sequence is that of Adenylosuccinate synthetase from Rhizobium leguminosarum bv. trifolii (strain WSM2304).